The chain runs to 80 residues: Exodeoxyribonuclease 7 small subunit (80 aa).

This sequence belongs to the XseB family. Heterooligomer composed of large and small subunits.

It is found in the cytoplasm. It catalyses the reaction Exonucleolytic cleavage in either 5'- to 3'- or 3'- to 5'-direction to yield nucleoside 5'-phosphates.. Functionally, bidirectionally degrades single-stranded DNA into large acid-insoluble oligonucleotides, which are then degraded further into small acid-soluble oligonucleotides. In Rickettsia africae (strain ESF-5), this protein is Exodeoxyribonuclease 7 small subunit.